The sequence spans 954 residues: Chromosomal passenger complex protein BIR1 (954 aa).

BIR repeat units lie at residues 20-117 (RLRT…LLIY) and 153-241 (RKFT…YFFQ). 4 residues coordinate Zn(2+): C208, C211, H228, and C237. Residues 375-419 (NVQLTQSSSPIKKKRKFKRISPRKIFDEEDSEHSLNNNSANGDNK) form a disordered region. Residues 385-396 (IKKKRKFKRISP) are compositionally biased toward basic residues. A phosphoserine mark is found at S477, S508, and S552. 2 disordered regions span residues 541 to 645 (DIDR…SGKV) and 661 to 685 (FSAS…ISTP). Basic and acidic residues predominate over residues 556-583 (PKTHELIRDNSEKREAQNGEFRHQKDST). S587 carries the post-translational modification Phosphoserine. The segment covering 593 to 604 (SNKSGDNSSNIT) has biased composition (polar residues). S751 and S765 each carry phosphoserine. The disordered stretch occupies residues 798–839 (LVSGTSSYPRNSRLEEQRKETSTSLADNSKKGSSFNEGNNEK). Over residues 809 to 818 (SRLEEQRKET) the composition is skewed to basic and acidic residues. The span at 819–835 (STSLADNSKKGSSFNEG) shows a compositional bias: polar residues.

Component of the CPC complex at least composed of IPL1, BIR1 and SLI15. Interacts with CBF2/NDC10. Interacts with CBF3D/SKP1.

In terms of biological role, component of the chromosomal passenger complex (CPC), a complex that acts as a key regulator of chromosome segregation and cytokinesis. The protein is Chromosomal passenger complex protein BIR1 (BIR1) of Saccharomyces cerevisiae (strain ATCC 204508 / S288c) (Baker's yeast).